The sequence spans 612 residues: MALVSVAPLASRSCLSKSLISSTHELKPLRRTILPTLRWKSATPSINMCLTTSNSVDAVQRRIANHHSNLWDDDFIQSLSTPYEAPSYRERAERLIGEVKEMFESMGPNNDLLQRLSMVESVERLGIDRHFKNEIKSALDYVYSHWNEKGIGCGRDSVVSDLNSTALALRTLRLHGYPVSSDVLEHFKDQKGRFACSSIKTEGEIRSLLNLFRASLVAFPNEKVMEEAEIFSTTYLKEAVQKIPVSSLSRQIEYNMEYGWHTNLPRLEARNYMGDMIHEMPYMNAEKLLELAKLEFNIFHSLQERELKHLSRWWKDSGFSQLTFVRHRHVEYYTLASCIDIDPKHSAFRLGFAKMCHLITVLDDIYDTFGTMDELKLFTAAIKRWDPSATEWLPEYMKGVYMVVYETVNEMAGEAKKSQGRDTINYSRQAWEAYIDSYMKEAEWISSGCLPTFEEYYENGKVSFGYQISVLQPILTLDVPLPHHILQEIIFPSRFNGLASGILRLKGDTRCYQADRARGEEASCISCYMNDNPGATEEDALNHINAMVNELMKEFNWELLKPDNNVPVSSKKHAFDITRVVHHGYKYRDGYSVANNEIKNLVITTVLEPVPL.

The transit peptide at 1–52 directs the protein to the chloroplast; that stretch reads MALVSVAPLASRSCLSKSLISSTHELKPLRRTILPTLRWKSATPSINMCLTT. 3 residues coordinate Mg(2+): Asp-363, Asp-367, and Asp-515. The DDXXD motif signature appears at 363 to 367; it reads DDIYD.

Belongs to the terpene synthase family. Tpsd subfamily. Requires Mg(2+) as cofactor. The cofactor is Mn(2+).

Its subcellular location is the plastid. It localises to the chloroplast. The enzyme catalyses (2E)-geranyl diphosphate + H2O = 1,8-cineole + diphosphate. It functions in the pathway terpene metabolism; oleoresin biosynthesis. Functionally, terpene synthase (TPS) involved in the biosynthesis of monoterpene natural products included in conifer oleoresin secretions and volatile emissions; these compounds contribute to biotic and abiotic stress defense against herbivores and pathogens. Catalyzes the conversion of (2E)-geranyl diphosphate (GPP) to 1,8-cineole. The sequence is that of 1,8-cineole synthase, chloroplastic from Picea sitchensis (Sitka spruce).